A 1343-amino-acid chain; its full sequence is Spermatogenesis-associated protein 31A6 (1343 aa).

The chain crosses the membrane as a helical span at residues 23 to 43 (PWVLDIFLTLVFALGFFFLLL). Disordered stretches follow at residues 55 to 88 (PSPS…RECP), 106 to 235 (GPHL…STLI), 624 to 654 (DESP…EAQK), 895 to 951 (PRGI…REAV), 1080 to 1156 (VQEE…PPSV), and 1309 to 1331 (KAVS…SHHH). A compositionally biased stretch (basic residues) spans 60 to 82 (GKRKCPVGRRRRPRGRMKNHSLR). Positions 165 to 178 (LASTPSPGPMTTSV) are enriched in polar residues. Pro residues predominate over residues 198–222 (PEPPALFPHPPHTPDPLACSPPPPK). Polar residues-rich tracts occupy residues 627 to 647 (PGTS…STGE) and 923 to 944 (LTYS…SSKA). Basic and acidic residues-rich tracts occupy residues 1104–1123 (HKSE…RLEG) and 1133–1142 (RKTEDTHQDE).

Belongs to the SPATA31 family.

The protein resides in the membrane. May play a role in spermatogenesis. This is Spermatogenesis-associated protein 31A6 (SPATA31A6) from Homo sapiens (Human).